Reading from the N-terminus, the 217-residue chain is 3,4-dihydroxy-2-butanone 4-phosphate synthase (217 aa).

D-ribulose 5-phosphate is bound by residues 37-38, Asp-42, 150-154, and Glu-174; these read RE and RRGHT. Glu-38 provides a ligand contact to Mg(2+). His-153 provides a ligand contact to Mg(2+).

Belongs to the DHBP synthase family. Homodimer. Mg(2+) serves as cofactor. Mn(2+) is required as a cofactor.

The enzyme catalyses D-ribulose 5-phosphate = (2S)-2-hydroxy-3-oxobutyl phosphate + formate + H(+). It participates in cofactor biosynthesis; riboflavin biosynthesis; 2-hydroxy-3-oxobutyl phosphate from D-ribulose 5-phosphate: step 1/1. Its function is as follows. Catalyzes the conversion of D-ribulose 5-phosphate to formate and 3,4-dihydroxy-2-butanone 4-phosphate. This chain is 3,4-dihydroxy-2-butanone 4-phosphate synthase, found in Syntrophotalea carbinolica (strain DSM 2380 / NBRC 103641 / GraBd1) (Pelobacter carbinolicus).